The following is a 116-amino-acid chain: Large ribosomal subunit protein bL17 (116 aa).

This sequence belongs to the bacterial ribosomal protein bL17 family. Part of the 50S ribosomal subunit. Contacts protein L32.

The sequence is that of Large ribosomal subunit protein bL17 from Trichormus variabilis (strain ATCC 29413 / PCC 7937) (Anabaena variabilis).